A 937-amino-acid chain; its full sequence is Translation initiation factor IF-2 (937 aa).

2 disordered regions span residues Ile-61–Gln-156 and Leu-171–Ile-274. Positions Ala-179–His-196 are enriched in basic and acidic residues. The segment covering Glu-197–Ile-208 has biased composition (basic residues). The segment covering Glu-237–Lys-252 has biased composition (basic and acidic residues). The region spanning Glu-436–Lys-605 is the tr-type G domain. A G1 region spans residues Gly-445–Thr-452. Gly-445–Thr-452 serves as a coordination point for GTP. The segment at Gly-470 to His-474 is G2. The interval Asp-491–Gly-494 is G3. GTP-binding positions include Asp-491–His-495 and Asn-545–Asp-548. The tract at residues Asn-545–Asp-548 is G4. A G5 region spans residues Ser-581 to Lys-583.

Belongs to the TRAFAC class translation factor GTPase superfamily. Classic translation factor GTPase family. IF-2 subfamily.

The protein localises to the cytoplasm. Functionally, one of the essential components for the initiation of protein synthesis. Protects formylmethionyl-tRNA from spontaneous hydrolysis and promotes its binding to the 30S ribosomal subunits. Also involved in the hydrolysis of GTP during the formation of the 70S ribosomal complex. This chain is Translation initiation factor IF-2, found in Helicobacter pylori (strain G27).